Reading from the N-terminus, the 376-residue chain is Chaperone protein DnaJ (376 aa).

Residues 5-70 (DYYEVLGVKK…QKRAAYDQYG (66 aa)) enclose the J domain. The CR-type zinc-finger motif lies at 131–209 (GVTKEIRIPT…CHGHGRVEKS (79 aa)). 8 residues coordinate Zn(2+): cysteine 144, cysteine 147, cysteine 161, cysteine 164, cysteine 183, cysteine 186, cysteine 197, and cysteine 200. CXXCXGXG motif repeat units follow at residues 144 to 151 (CDVCHGSG), 161 to 168 (CSTCRGAG), 183 to 190 (CPTCHGSG), and 197 to 204 (CNKCHGHG).

It belongs to the DnaJ family. As to quaternary structure, homodimer. It depends on Zn(2+) as a cofactor.

It localises to the cytoplasm. Functionally, participates actively in the response to hyperosmotic and heat shock by preventing the aggregation of stress-denatured proteins and by disaggregating proteins, also in an autonomous, DnaK-independent fashion. Unfolded proteins bind initially to DnaJ; upon interaction with the DnaJ-bound protein, DnaK hydrolyzes its bound ATP, resulting in the formation of a stable complex. GrpE releases ADP from DnaK; ATP binding to DnaK triggers the release of the substrate protein, thus completing the reaction cycle. Several rounds of ATP-dependent interactions between DnaJ, DnaK and GrpE are required for fully efficient folding. Also involved, together with DnaK and GrpE, in the DNA replication of plasmids through activation of initiation proteins. This chain is Chaperone protein DnaJ, found in Yersinia enterocolitica serotype O:8 / biotype 1B (strain NCTC 13174 / 8081).